The following is an 845-amino-acid chain: Protein kintoun (845 aa).

The span at 362–382 (SKEQAQMHETLRHFSREDSGV) shows a compositional bias: basic and acidic residues. 3 disordered regions span residues 362–420 (SKEQ…PVRH), 575–691 (QALK…SMSD), and 773–845 (AQHR…EMDD). Ser-380 is modified (phosphoserine). Residues 391-400 (PVEEDPDGEL) show a composition bias toward acidic residues. A compositionally biased stretch (basic and acidic residues) spans 584–593 (GTKEEEKENQ). Residues 611-622 (KPGKKQRKRNKK) are compositionally biased toward basic residues. Over residues 640-671 (LTKNSELQPKSTFNLPQRKQRSYSECNDSTGG) the composition is skewed to polar residues. Ser-779 carries the post-translational modification Phosphoserine. The span at 794 to 804 (LKQQENQSRNC) shows a compositional bias: polar residues.

It belongs to the PIH1 family. Kintoun subfamily. As to quaternary structure, interacts with Pp1alpha-96A, Pp1-87B, Pp1-13C and flw.

The protein localises to the cytoplasm. In terms of biological role, required for cytoplasmic pre-assembly of axonemal dyneins, thereby playing a central role in motility in cilia and flagella. Involved in pre-assembly of dynein arm complexes in the cytoplasm before intraflagellar transport loads them for the ciliary compartment. In Drosophila erecta (Fruit fly), this protein is Protein kintoun.